The primary structure comprises 397 residues: Acetate kinase (397 aa).

Asn-7 contributes to the Mg(2+) binding site. ATP is bound at residue Lys-14. Residue Arg-91 participates in substrate binding. Asp-148 (proton donor/acceptor) is an active-site residue. ATP-binding positions include 208 to 212 (HIGNG), 283 to 285 (DMR), and 331 to 335 (GVGEN). Glu-384 contributes to the Mg(2+) binding site.

It belongs to the acetokinase family. As to quaternary structure, homodimer. It depends on Mg(2+) as a cofactor. Mn(2+) serves as cofactor.

It localises to the cytoplasm. It carries out the reaction acetate + ATP = acetyl phosphate + ADP. Its pathway is metabolic intermediate biosynthesis; acetyl-CoA biosynthesis; acetyl-CoA from acetate: step 1/2. In terms of biological role, catalyzes the formation of acetyl phosphate from acetate and ATP. Can also catalyze the reverse reaction. This is Acetate kinase from Azobacteroides pseudotrichonymphae genomovar. CFP2.